The primary structure comprises 264 residues: 3-methyl-2-oxobutanoate hydroxymethyltransferase (264 aa).

Residues D46 and D85 each contribute to the Mg(2+) site. 3-methyl-2-oxobutanoate-binding positions include 46 to 47 (DS), D85, and K113. E115 contacts Mg(2+). E181 serves as the catalytic Proton acceptor.

The protein belongs to the PanB family. As to quaternary structure, homodecamer; pentamer of dimers. Mg(2+) serves as cofactor.

The protein resides in the cytoplasm. It carries out the reaction 3-methyl-2-oxobutanoate + (6R)-5,10-methylene-5,6,7,8-tetrahydrofolate + H2O = 2-dehydropantoate + (6S)-5,6,7,8-tetrahydrofolate. It participates in cofactor biosynthesis; (R)-pantothenate biosynthesis; (R)-pantoate from 3-methyl-2-oxobutanoate: step 1/2. Its function is as follows. Catalyzes the reversible reaction in which hydroxymethyl group from 5,10-methylenetetrahydrofolate is transferred onto alpha-ketoisovalerate to form ketopantoate. The sequence is that of 3-methyl-2-oxobutanoate hydroxymethyltransferase from Salmonella typhi.